A 336-amino-acid chain; its full sequence is Casein kinase II subunit alpha (336 aa).

The Protein kinase domain maps to 32–317; the sequence is YEVVRKIGRG…AKEAMAHPYF (286 aa). ATP-binding positions include 38 to 46 and Lys61; that span reads IGRGKYSEV. Asp149 acts as the Proton acceptor in catalysis.

Belongs to the protein kinase superfamily. Ser/Thr protein kinase family. CK2 subfamily. In terms of assembly, tetramer composed of two alpha chains, one beta chain and one beta' chain.

It catalyses the reaction L-seryl-[protein] + ATP = O-phospho-L-seryl-[protein] + ADP + H(+). It carries out the reaction L-threonyl-[protein] + ATP = O-phospho-L-threonyl-[protein] + ADP + H(+). Catalytic subunit of a constitutively active serine/threonine-protein kinase complex that phosphorylates a large number of substrates containing acidic residues C-terminal to the phosphorylated serine or threonine. Phosphorylates the frq clock protein thus regulating the circadian clock. The protein is Casein kinase II subunit alpha (cka) of Neurospora crassa (strain ATCC 24698 / 74-OR23-1A / CBS 708.71 / DSM 1257 / FGSC 987).